The following is a 390-amino-acid chain: MAQRYDDLPHYGGMDGVGIPSTMYGDPHAARSMQPVHHLNHGPPLHSHQYPHTAHTNAMAPSMGSSVNDALKRDKDAIYGHPLFPLLALIFEKCELATCTPREPGVAGGDVCSSESFNEDIAVFAKQIRAEKPLFSSNPELDNLMIQAIQVLRFHLLELEKVHELCDNFCHRYISCLKGKMPIDLVIDDREGGSKSDSEDITRSANLTDQPSWNRDHDDTASTRSGGTPGPSSGGHTSHSGDNSSEQGDGLDNSVASPSTGDDDDPDKDKKRHKKRGIFPKVATNIMRAWLFQHLTHPYPSEEQKKQLAQDTGLTILQVNNWFINARRRIVQPMIDQSNRAVSQGTPYNPDGQPMGGFVMDGQQHMGIRAPGPMSGMGMNMGMEGQWHYM.

In terms of domain architecture, MEIS N-terminal spans 108 to 192 (GGDVCSSESF…IDLVIDDREG (85 aa)). The segment covering 190-202 (REGGSKSDSEDIT) has biased composition (basic and acidic residues). The tract at residues 190-279 (REGGSKSDSE…KKRHKKRGIF (90 aa)) is disordered. The span at 203 to 213 (RSANLTDQPSW) shows a compositional bias: polar residues. The segment at residues 272–334 (RHKKRGIFPK…NARRRIVQPM (63 aa)) is a DNA-binding region (homeobox; TALE-type). The segment at 299–329 (YPSEEQKKQLAQDTGLTILQVNNWFINARRR) is interaction with DNA. The segment at 335–390 (IDQSNRAVSQGTPYNPDGQPMGGFVMDGQQHMGIRAPGPMSGMGMNMGMEGQWHYM) is required for transcriptional activation.

It belongs to the TALE/MEIS homeobox family. As to quaternary structure, interacts with the N-terminal region of PBX1 to form a heterodimer which binds DNA including a cAMP-responsive sequence in CYP17. Also forms heterodimers with PBX2. Forms heterotrimers with PBX1 or PBX2 and a number of HOX proteins including HOXA9, HOXD4 and HOXD9 where it acts as a non-DNA-binding partner. Also forms heterotrimers with PBX1 and HOX proteins including HOXD9 and HOXD10 where PBX1 is the non-DNA-binding partner. Heterodimer with DLX3. Heterodimer with HOXB13. Expressed at low level in normal immunohepatopoietic tissues, including the fetal liver. Expressed in a subset of myeloid leukemia cell lines, with the highest expression seen in those with a megakaryocytic-erythroid phenotype. Also expressed at high levels in the cerebellum.

It localises to the nucleus. In terms of biological role, acts as a transcriptional regulator of PAX6. Acts as a transcriptional activator of PF4 in complex with PBX1 or PBX2. Required for hematopoiesis, megakaryocyte lineage development and vascular patterning. May function as a cofactor for HOXA7 and HOXA9 in the induction of myeloid leukemias. This chain is Homeobox protein Meis1 (MEIS1), found in Homo sapiens (Human).